The following is a 541-amino-acid chain: Chaperonin GroEL (541 aa).

ATP is bound by residues 29–32, 86–90, Gly-413, 476–478, and Asp-492; these read TLGP, DGTTT, and NAA. Residues 521–541 form a disordered region; the sequence is KPEDNPAPAAPAANPGMGGMM. The span at 526–535 shows a compositional bias: low complexity; the sequence is PAPAAPAANP.

It belongs to the chaperonin (HSP60) family. Forms a cylinder of 14 subunits composed of two heptameric rings stacked back-to-back. Interacts with the co-chaperonin GroES.

Its subcellular location is the cytoplasm. The catalysed reaction is ATP + H2O + a folded polypeptide = ADP + phosphate + an unfolded polypeptide.. Its function is as follows. Together with its co-chaperonin GroES, plays an essential role in assisting protein folding. The GroEL-GroES system forms a nano-cage that allows encapsulation of the non-native substrate proteins and provides a physical environment optimized to promote and accelerate protein folding. This is Chaperonin GroEL from Levilactobacillus brevis (strain ATCC 367 / BCRC 12310 / CIP 105137 / JCM 1170 / LMG 11437 / NCIMB 947 / NCTC 947) (Lactobacillus brevis).